A 469-amino-acid polypeptide reads, in one-letter code: 3-isopropylmalate dehydratase large subunit (469 aa).

3 residues coordinate [4Fe-4S] cluster: C350, C410, and C413.

It belongs to the aconitase/IPM isomerase family. LeuC type 1 subfamily. In terms of assembly, heterodimer of LeuC and LeuD. Requires [4Fe-4S] cluster as cofactor.

It catalyses the reaction (2R,3S)-3-isopropylmalate = (2S)-2-isopropylmalate. It participates in amino-acid biosynthesis; L-leucine biosynthesis; L-leucine from 3-methyl-2-oxobutanoate: step 2/4. Its function is as follows. Catalyzes the isomerization between 2-isopropylmalate and 3-isopropylmalate, via the formation of 2-isopropylmaleate. In Rhizobium meliloti (strain 1021) (Ensifer meliloti), this protein is 3-isopropylmalate dehydratase large subunit.